Consider the following 130-residue polypeptide: uncharacterized protein (130 aa).

The segment at 1 to 100 (MSSNSDNTEC…AEPDAAKEEP (100 aa)) is disordered. Composition is skewed to basic and acidic residues over residues 57 to 75 (YTTR…KMMD) and 91 to 100 (AEPDAAKEEP).

This is an uncharacterized protein from Equine herpesvirus 1 (strain Ab4p) (EHV-1).